Consider the following 259-residue polypeptide: Haloacid dehalogenase-like hydrolase domain-containing protein 2 (259 aa).

Aspartate 13 and serine 15 together coordinate Mg(2+). Residues 13-15 (DLS) and 46-47 (TN) each bind substrate. Residues 47–71 (NTTKESKQDLLERLRKLEFDISEDE) are a coiled coil. Lysine 50 is subject to N6-succinyllysine. Lysine 179 contributes to the substrate binding site. Aspartate 204 contributes to the Mg(2+) binding site.

The protein belongs to the HAD-like hydrolase superfamily. The cofactor is Mg(2+).

The protein is Haloacid dehalogenase-like hydrolase domain-containing protein 2 (HDHD2) of Pongo abelii (Sumatran orangutan).